The primary structure comprises 305 residues: Glycerol-3-phosphate dehydrogenase [NAD(P)+] (305 aa).

Residues F10, R29, and K87 each coordinate NADPH. The sn-glycerol 3-phosphate site is built by K87, G115, and S117. A119 provides a ligand contact to NADPH. Sn-glycerol 3-phosphate-binding residues include K170, D223, S233, R234, and N235. The Proton acceptor role is filled by K170. Residue R234 participates in NADPH binding. E255 is a binding site for NADPH.

Belongs to the NAD-dependent glycerol-3-phosphate dehydrogenase family.

The protein resides in the cytoplasm. It catalyses the reaction sn-glycerol 3-phosphate + NAD(+) = dihydroxyacetone phosphate + NADH + H(+). The catalysed reaction is sn-glycerol 3-phosphate + NADP(+) = dihydroxyacetone phosphate + NADPH + H(+). It functions in the pathway membrane lipid metabolism; glycerophospholipid metabolism. Catalyzes the reduction of the glycolytic intermediate dihydroxyacetone phosphate (DHAP) to sn-glycerol 3-phosphate (G3P), the key precursor for phospholipid synthesis. This Cereibacter sphaeroides (strain ATCC 17023 / DSM 158 / JCM 6121 / CCUG 31486 / LMG 2827 / NBRC 12203 / NCIMB 8253 / ATH 2.4.1.) (Rhodobacter sphaeroides) protein is Glycerol-3-phosphate dehydrogenase [NAD(P)+].